A 298-amino-acid polypeptide reads, in one-letter code: uncharacterized protein (298 aa).

This sequence to M.tuberculosis Rv1486c, M.bovis Mb1522c and M.avium MAV321.

This is an uncharacterized protein from Mycobacterium leprae (strain TN).